The primary structure comprises 441 residues: UBX domain-containing protein 6 (441 aa).

Residues 1-10 are mediates interaction with LMAN1; sequence MKKFFQEIKA. Disordered stretches follow at residues 12–57, 62–81, and 86–113; these read IKFK…MAAA, RLEQ…SIRN, and ELRA…EEGS. Positions 27–36 are enriched in basic and acidic residues; it reads VGEKAPKEKP. The segment at 51 to 63 is VCP/p97-interacting motif (VIM); the sequence is EAQMAAAAALARL. The region spanning 175 to 244 is the PUB domain; that stretch reads VDTIAKYLDN…GPEEFYVLSE (70 aa). The 77-residue stretch at 332–408 folds into the UBX domain; sequence RKYTYTLLRV…GLVPSALLTF (77 aa).

As to quaternary structure, interacts with VCP through the PUB domain (via C-terminus) and VIM motif (via N-terminus); the interaction is direct. Forms a ternary complex with CAV1 and VCP. Interacts with SYVN1. Interacts with HERPUD1. Interacts with VCPKMT. May interact with DERL1. Interacts with PLAA, VCP and YOD1; may form a complex involved in macroautophagy. Interacts with LMAN1.

It is found in the cytoplasm. Its subcellular location is the cytosol. The protein resides in the membrane. It localises to the nucleus. The protein localises to the cytoskeleton. It is found in the microtubule organizing center. Its subcellular location is the centrosome. The protein resides in the early endosome membrane. It localises to the late endosome membrane. The protein localises to the lysosome membrane. May negatively regulate the ATPase activity of VCP, an ATP-driven segregase that associates with different cofactors to control a wide variety of cellular processes. As a cofactor of VCP, it may play a role in the transport of CAV1 to lysosomes for degradation. It may also play a role in endoplasmic reticulum-associated degradation (ERAD) of misfolded proteins. Together with VCP and other cofactors, it may play a role in macroautophagy, regulating for instance the clearance of damaged lysosomes. The polypeptide is UBX domain-containing protein 6 (Bos taurus (Bovine)).